The sequence spans 953 residues: Isoleucine--tRNA ligase (953 aa).

A 'HIGH' region motif is present at residues 58-68 (PYANGSIHIGH). Glu-577 is an L-isoleucyl-5'-AMP binding site. Positions 618–622 (KMSKS) match the 'KMSKS' region motif. Residue Lys-621 participates in ATP binding. Cys-916, Cys-919, Cys-936, and Cys-939 together coordinate Zn(2+).

The protein belongs to the class-I aminoacyl-tRNA synthetase family. IleS type 1 subfamily. Monomer. Zn(2+) is required as a cofactor.

The protein localises to the cytoplasm. The enzyme catalyses tRNA(Ile) + L-isoleucine + ATP = L-isoleucyl-tRNA(Ile) + AMP + diphosphate. In terms of biological role, catalyzes the attachment of isoleucine to tRNA(Ile). As IleRS can inadvertently accommodate and process structurally similar amino acids such as valine, to avoid such errors it has two additional distinct tRNA(Ile)-dependent editing activities. One activity is designated as 'pretransfer' editing and involves the hydrolysis of activated Val-AMP. The other activity is designated 'posttransfer' editing and involves deacylation of mischarged Val-tRNA(Ile). This is Isoleucine--tRNA ligase from Aeromonas salmonicida (strain A449).